We begin with the raw amino-acid sequence, 400 residues long: MSSGSAGAPALSNNSTNSVAKEKSGNISGDEYLSQEEEVFDGNDIENNETKVYEESLDLDLERSNRQVWLVRLPMFLAEKWRDRNNLHGQELGKIRINKDGSKITLLLNENDNDSIPHEYDLELTKKVVENEYVFTEQNLKKYQQRKKELEADPEKQRQAYLKKQEREEELKKKQQQQKRRNNRKKFNHRVMTDRDGRDRYIPYVKTIPKKTAIVGTVCHECQVMPSMNDPNYHKIVEQRRNIVKLNNKERITTLDETVGVTMSHTGMSMRSDNSNFLKVGREKAKSNIKSIRMPKKEILDYLFKLFDEYDYWSLKGLKERTRQPEAHLKECLDKVATLVKKGPYAFKYTLRPEYKKLKEEERKATLGELADEQTGSAGDNAQGDAEADLEDEIEMEDVV.

Residues 1-19 show a composition bias toward polar residues; sequence MSSGSAGAPALSNNSTNSV. The interval 1–47 is disordered; the sequence is MSSGSAGAPALSNNSTNSVAKEKSGNISGDEYLSQEEEVFDGNDIEN. A phosphoserine mark is found at serine 28, serine 34, and serine 56. The segment covering 33-47 has biased composition (acidic residues); it reads LSQEEEVFDGNDIEN. 2 disordered regions span residues 165 to 194 and 366 to 400; these read QERE…VMTD and TLGE…EDVV. A compositionally biased stretch (basic residues) spans 174 to 189; it reads KQQQQKRRNNRKKFNH. Over residues 386–400 the composition is skewed to acidic residues; it reads AEADLEDEIEMEDVV.

Belongs to the TFIIF beta subunit family. In terms of assembly, TFIIF is composed of three different subunits: TFG1/RAP74, TFG2/RAP30 and TAF14.

It localises to the nucleus. Functionally, TFIIF is a general transcription initiation factor that binds to RNA polymerase II. Its functions include the recruitment of RNA polymerase II to the promoter bound DNA-TBP-TFIIB complex, decreasing the affinity of RNA polymerase II for non-specific DNA, allowing for the subsequent recruitment of TFIIE and TFIIH, and facilitating RNA polymerase II elongation. This is Transcription initiation factor IIF subunit beta (TFG2) from Saccharomyces cerevisiae (strain ATCC 204508 / S288c) (Baker's yeast).